The chain runs to 240 residues: Endonuclease NucS 1 (240 aa).

Belongs to the NucS endonuclease family.

It localises to the cytoplasm. In terms of biological role, cleaves both 3' and 5' ssDNA extremities of branched DNA structures. The protein is Endonuclease NucS 1 of Halobacterium salinarum (strain ATCC 700922 / JCM 11081 / NRC-1) (Halobacterium halobium).